A 249-amino-acid polypeptide reads, in one-letter code: MKIDPIHQFNIEPLFTIGHIGHQTIAFTNSSLYMLIAVAIISLLMLASGAQLVPGRLQSVAEISYEFVASTIRSTAGSEGMKFFPLIFSLFMFICVSNLIGIIPYTFTISSHLIVTAALALLVFFTVLIYGVAKNGLKFFSIFVPHGVPGYILPLVMFIEILSFFLRPVSHSVRLFANMLAGHIALKVFAGFVAMLGFSLGALGWVGGVLPLALTVALYALEILVAFLQAYVFAILTCIYLNDAIHPGH.

The next 6 helical transmembrane spans lie at 33–53 (YMLI…AQLV), 83–103 (FFPL…IGII), 113–133 (LIVT…YGVA), 139–159 (FFSI…VMFI), 188–208 (VFAG…WVGG), and 216–236 (VALY…FAIL).

Belongs to the ATPase A chain family. F-type ATPases have 2 components, CF(1) - the catalytic core - and CF(0) - the membrane proton channel. CF(1) has five subunits: alpha(3), beta(3), gamma(1), delta(1), epsilon(1). CF(0) has three main subunits: a(1), b(2) and c(9-12). The alpha and beta chains form an alternating ring which encloses part of the gamma chain. CF(1) is attached to CF(0) by a central stalk formed by the gamma and epsilon chains, while a peripheral stalk is formed by the delta and b chains.

It is found in the cell inner membrane. Functionally, key component of the proton channel; it plays a direct role in the translocation of protons across the membrane. This chain is ATP synthase subunit a, found in Bradyrhizobium diazoefficiens (strain JCM 10833 / BCRC 13528 / IAM 13628 / NBRC 14792 / USDA 110).